We begin with the raw amino-acid sequence, 224 residues long: Germin-like protein 8-5 (224 aa).

Residues 1–22 (MASPSSLCLLAALALISWQAMA) form the signal peptide. A disulfide bridge connects residues C32 and C47. Residues 62–212 (AKLDTPRKTN…AFQVEKGTID (151 aa)) form the Cupin type-1 domain. A glycan (N-linked (GlcNAc...) asparagine) is linked at N76. Residues H109, H111, and E116 each coordinate Mn(2+). N135 carries an N-linked (GlcNAc...) asparagine glycan. Mn(2+) is bound at residue H157.

It belongs to the germin family. As to quaternary structure, oligomer (believed to be a pentamer but probably hexamer).

It localises to the secreted. The protein resides in the extracellular space. It is found in the apoplast. Its function is as follows. Plays a role in broad-spectrum disease resistance. Probably has no oxalate oxidase activity even if the active site is conserved. The polypeptide is Germin-like protein 8-5 (Oryza sativa subsp. japonica (Rice)).